Here is a 337-residue protein sequence, read N- to C-terminus: Lipopolysaccharide 1,3-galactosyltransferase (337 aa).

UDP contacts are provided by residues 33-38 and 130-131; these read GIDKNF and DA. Mg(2+)-binding residues include aspartate 130 and aspartate 132. Short sequence motifs (DXD) lie at residues 130–132 and 219–221; these read DAD and DQD. Mg(2+) is bound at residue histidine 264. 264–270 is a UDP binding site; that stretch reads HYIGPTK.

This sequence belongs to the glycosyltransferase 8 family. Requires Mg(2+) as cofactor.

It catalyses the reaction UDP-alpha-D-galactose + [lipopolysaccharide] = UDP + 3-alpha-D-galactosyl-[lipopolysaccharide].. It participates in bacterial outer membrane biogenesis; LPS core biosynthesis. Its activity is regulated as follows. Inhibited in a competitive manner by closely related nonsubstrate lipopolysaccharides. Its function is as follows. Galactosyltransferase involved in the biosynthesis of the core oligosaccharide region of lipopolysaccharide (LPS). Catalyzes the addition of an alpha l,3-linked galactose (galactose I) to the first outer-core glucose (glucose I). Cannot use UDP-glucose. Activity probably does not require the branched galactose added by WaaB, but it is higher in the presence of this branched galactose. In Salmonella typhimurium (strain LT2 / SGSC1412 / ATCC 700720), this protein is Lipopolysaccharide 1,3-galactosyltransferase.